The sequence spans 192 residues: uncharacterized protein (192 aa).

The 132-residue stretch at 29–160 (HRQAAVLIPI…PLDIYRRGDS (132 aa)) folds into the Nudix hydrolase domain. Residues 67 to 89 (GAVDDTDASAIAAALREAEEEVA) carry the Nudix box motif. Mg(2+) is bound by residues Glu83 and Glu87.

The protein belongs to the Nudix hydrolase family. PCD1 subfamily. The cofactor is Mn(2+). Mg(2+) serves as cofactor.

In terms of biological role, probably mediates the hydrolysis of some nucleoside diphosphate derivatives. This is an uncharacterized protein from Escherichia coli (strain K12).